We begin with the raw amino-acid sequence, 332 residues long: Glycerol-3-phosphate dehydrogenase [NAD(P)+] (332 aa).

The NADPH site is built by serine 15, tryptophan 16, and lysine 110. 3 residues coordinate sn-glycerol 3-phosphate: lysine 110, glycine 137, and serine 139. Alanine 141 lines the NADPH pocket. The sn-glycerol 3-phosphate site is built by lysine 192, aspartate 245, serine 255, arginine 256, and asparagine 257. Lysine 192 (proton acceptor) is an active-site residue. Arginine 256 is a binding site for NADPH. Glutamate 282 is a binding site for NADPH.

It belongs to the NAD-dependent glycerol-3-phosphate dehydrogenase family.

It is found in the cytoplasm. The catalysed reaction is sn-glycerol 3-phosphate + NAD(+) = dihydroxyacetone phosphate + NADH + H(+). It catalyses the reaction sn-glycerol 3-phosphate + NADP(+) = dihydroxyacetone phosphate + NADPH + H(+). It functions in the pathway membrane lipid metabolism; glycerophospholipid metabolism. Functionally, catalyzes the reduction of the glycolytic intermediate dihydroxyacetone phosphate (DHAP) to sn-glycerol 3-phosphate (G3P), the key precursor for phospholipid synthesis. The protein is Glycerol-3-phosphate dehydrogenase [NAD(P)+] of Coxiella burnetii (strain CbuG_Q212) (Coxiella burnetii (strain Q212)).